The sequence spans 300 residues: Cation-efflux pump FieF (300 aa).

4 consecutive transmembrane segments (helical) span residues 12–32 (AAIA…FAWW), 39–59 (ILAA…NLLV), 82–102 (AALA…LTGI), and 114–134 (PGVG…LVSF). Zn(2+) is bound by residues Asp-45 and Asp-49. Residues His-153 and Asp-157 each coordinate Zn(2+). The next 2 helical transmembrane spans lie at 156 to 176 (SDVM…YGWH) and 178 to 198 (ADAL…LRMG).

The protein belongs to the cation diffusion facilitator (CDF) transporter (TC 2.A.4) family. FieF subfamily. As to quaternary structure, homodimer.

It localises to the cell inner membrane. It catalyses the reaction Zn(2+)(in) + H(+)(out) = Zn(2+)(out) + H(+)(in). The catalysed reaction is Cd(2+)(in) + H(+)(out) = Cd(2+)(out) + H(+)(in). It carries out the reaction Fe(2+)(in) + H(+)(out) = Fe(2+)(out) + H(+)(in). Its function is as follows. Divalent metal cation transporter which exports Zn(2+), Cd(2+) and possibly Fe(2+). May be involved in zinc and iron detoxification by efflux. In Shigella boydii serotype 18 (strain CDC 3083-94 / BS512), this protein is Cation-efflux pump FieF.